Here is a 328-residue protein sequence, read N- to C-terminus: GMP reductase (328 aa).

Cys176 acts as the Thioimidate intermediate in catalysis. Residue 205–228 (IIADGGIRTHGDIAKSIRFGASMV) coordinates NADP(+).

The protein belongs to the IMPDH/GMPR family. GuaC type 2 subfamily.

The enzyme catalyses IMP + NH4(+) + NADP(+) = GMP + NADPH + 2 H(+). Its function is as follows. Catalyzes the irreversible NADPH-dependent deamination of GMP to IMP. It functions in the conversion of nucleobase, nucleoside and nucleotide derivatives of G to A nucleotides, and in maintaining the intracellular balance of A and G nucleotides. The chain is GMP reductase from Streptococcus pneumoniae (strain Hungary19A-6).